We begin with the raw amino-acid sequence, 75 residues long: Small ribosomal subunit protein bS18 (75 aa).

Belongs to the bacterial ribosomal protein bS18 family. As to quaternary structure, part of the 30S ribosomal subunit. Forms a tight heterodimer with protein bS6.

In terms of biological role, binds as a heterodimer with protein bS6 to the central domain of the 16S rRNA, where it helps stabilize the platform of the 30S subunit. In Desulforudis audaxviator (strain MP104C), this protein is Small ribosomal subunit protein bS18.